A 95-amino-acid chain; its full sequence is FXYD domain-containing ion transport regulator 6 (95 aa).

The signal sequence occupies residues 1 to 18 (MELVLVFLCSLLAPMVLA). Residues 19 to 35 (SAAEKEKEMDPFHYDYQ) are Extracellular-facing. Residues 36–57 (TLRIGGLVFAVVLFSVGILLIL) form a helical membrane-spanning segment. The Cytoplasmic segment spans residues 58 to 95 (SRRCKCSFNQKPRAPGDEEAQVENLITANATEPQKAEN). A disordered region spans residues 69–95 (PRAPGDEEAQVENLITANATEPQKAEN).

Belongs to the FXYD family. In terms of assembly, regulatory subunit of the sodium/potassium-transporting ATPase which is composed of a catalytic alpha subunit, a non-catalytic beta subunit and an additional regulatory subunit. The regulatory subunit, a member of the FXYD protein family, modulates the enzymatic activity in a tissue- and isoform-specific way by changing affinities of the Na+/K+-ATPase toward Na(+), K(+) or ATP.

Its subcellular location is the cell membrane. Associates with and regulates the activity of the sodium/potassium-transporting ATPase (NKA) which catalyzes the hydrolysis of ATP coupled with the exchange of Na(+) and K(+) ions across the plasma membrane. Reduces the apparent affinity for intracellular Na(+) with no change in the apparent affinity for extracellular K(+). In addition to modulating NKA kinetics, may also function as a regulator of NKA localization to the plasma membrane. The chain is FXYD domain-containing ion transport regulator 6 from Homo sapiens (Human).